We begin with the raw amino-acid sequence, 261 residues long: Glucose 1-dehydrogenase (261 aa).

Position 11–35 (11–35 (VITGSSTGLGKSMAIRFATEKAKVV)) interacts with NADP(+). Residue Ser-145 coordinates substrate. Tyr-158 (proton acceptor) is an active-site residue.

The protein belongs to the short-chain dehydrogenases/reductases (SDR) family. Homotetramer.

The enzyme catalyses D-glucose + NAD(+) = D-glucono-1,5-lactone + NADH + H(+). It catalyses the reaction D-glucose + NADP(+) = D-glucono-1,5-lactone + NADPH + H(+). In Priestia megaterium (Bacillus megaterium), this protein is Glucose 1-dehydrogenase.